The chain runs to 159 residues: Ribosomal RNA large subunit methyltransferase H (159 aa).

Residues isoleucine 76, glycine 108, and 127 to 132 each bind S-adenosyl-L-methionine; that span reads FSKMTF.

Belongs to the RNA methyltransferase RlmH family. Homodimer.

The protein localises to the cytoplasm. It catalyses the reaction pseudouridine(1915) in 23S rRNA + S-adenosyl-L-methionine = N(3)-methylpseudouridine(1915) in 23S rRNA + S-adenosyl-L-homocysteine + H(+). Functionally, specifically methylates the pseudouridine at position 1915 (m3Psi1915) in 23S rRNA. The chain is Ribosomal RNA large subunit methyltransferase H from Clostridium botulinum (strain Loch Maree / Type A3).